A 395-amino-acid polypeptide reads, in one-letter code: Phosphatidylinositol 4-phosphate 5-kinase-like protein 1 (395 aa).

The disordered stretch occupies residues 1–25; it reads MATPSLRSHEIPAHSQEAGNKSISS. The 358-residue stretch at 37–394 folds into the PIPK domain; it reads ARQSRVGLFE…RLCRWAEVHT (358 aa).

As to quaternary structure, interacts with type I phosphatidylinositol 4-phosphate 5-kinases, including PIP5K1A and PIP5K1B. In terms of tissue distribution, highly expressed in brain and testis, relatively to heart, spleen, lung, liver, skeletal muscle and kidney.

Its subcellular location is the cytoplasm. The protein resides in the membrane. May act as a scaffold to localize and regulate type I phosphatidylinositol 4-phosphate 5-kinases to specific compartments within the cell, where they generate PI(4,5)P2 for actin nucleation, signaling and scaffold protein recruitment and conversion to PI(3,4,5)P3. In Mus musculus (Mouse), this protein is Phosphatidylinositol 4-phosphate 5-kinase-like protein 1 (Pip5kl1).